The sequence spans 555 residues: Sesquiterpene synthase 31 (555 aa).

Residues D308, D312, D451, T455, and E459 each coordinate Mg(2+). Positions 308–312 (DDTFD) match the DDXXD motif motif.

The protein belongs to the terpene synthase family. Tpsa subfamily. Mg(2+) is required as a cofactor. Mn(2+) serves as cofactor. As to expression, expressed in stem and leaf trichomes. Detected in roots, fruits and flowers.

The protein resides in the cytoplasm. It catalyses the reaction (2E,6E)-farnesyl diphosphate = viridiflorene + diphosphate. It functions in the pathway secondary metabolite biosynthesis; terpenoid biosynthesis. Its function is as follows. Sesquiterpene synthase involved in the production of viridiflorene from (E,E)-farnesyl diphosphate (FPP). Has no activity with (Z,Z)-FPP. Can act with a low efficiency as a monoterpene synthase with geranyl diphosphate as substrate. This Solanum lycopersicum (Tomato) protein is Sesquiterpene synthase 31.